We begin with the raw amino-acid sequence, 220 residues long: Zip homologous protein 1 (220 aa).

Residues 6–44 (CNGCGCSPSKRQFFITACSHVFCETCRTTPTADFCHLCK) form an RING-type zinc finger. A coiled-coil region spans residues 124–155 (LTSFEENNRKKLEDIERENEKLRNLISALELK). 2 disordered regions span residues 166–186 (EFFM…SDVD) and 201–220 (RSDS…GSLF). Over residues 171–180 (GTPTSSNPSV) the composition is skewed to polar residues.

As to quaternary structure, interacts with zhp-2; the interaction is required for their chromosome association and stability. As to expression, expressed in the germline.

The protein resides in the chromosome. In terms of biological role, recruited co-dependently with zhp-2 to the synaptonemal complex between homologous chromosome pairs to regulate the formation and number of crossover events between homologs during meiotic recombination. Together with zhp-2, promotes the accumulation of pro-crossover proteins, including zhp-3 and zhp-4, at a designated crossover site along the recombination intermediate. Limits the number of crossover sites along a recombination intermediate by restricting the association of these pro-crossover proteins with other recombination sites during late prophase. Also, together with zhp-2, plays a role in chromosome remodeling following crossover formation to promote two successive rounds of chromosome segregation during meiosis. This Caenorhabditis elegans protein is Zip homologous protein 1.